Here is a 145-residue protein sequence, read N- to C-terminus: Putative type I specificity subunit S.MpnORF289P C-terminus (145 aa).

This sequence belongs to the type-I restriction system S methylase family. In terms of assembly, the methyltransferase is composed of M and S polypeptides.

Functionally, the C-terminal section of a specificity (S) subunit of a type I methyltransferase (MTase); this subunit dictates DNA sequence specificity. The single R subunit has multiple frameshifts and is probably not expressed. This chain is Putative type I specificity subunit S.MpnORF289P C-terminus, found in Mycoplasma pneumoniae (strain ATCC 29342 / M129 / Subtype 1) (Mycoplasmoides pneumoniae).